The sequence spans 238 residues: 2-C-methyl-D-erythritol 4-phosphate cytidylyltransferase (238 aa).

Belongs to the IspD/TarI cytidylyltransferase family. IspD subfamily.

The enzyme catalyses 2-C-methyl-D-erythritol 4-phosphate + CTP + H(+) = 4-CDP-2-C-methyl-D-erythritol + diphosphate. The protein operates within isoprenoid biosynthesis; isopentenyl diphosphate biosynthesis via DXP pathway; isopentenyl diphosphate from 1-deoxy-D-xylulose 5-phosphate: step 2/6. Its function is as follows. Catalyzes the formation of 4-diphosphocytidyl-2-C-methyl-D-erythritol from CTP and 2-C-methyl-D-erythritol 4-phosphate (MEP). The sequence is that of 2-C-methyl-D-erythritol 4-phosphate cytidylyltransferase from Shewanella amazonensis (strain ATCC BAA-1098 / SB2B).